Reading from the N-terminus, the 321-residue chain is CPX chromosomal region candidate gene 1 protein homolog (321 aa).

Residues 1–83 (MSSPTKEGSD…TEIQKDQREE (83 aa)) form a disordered region. 2 stretches are compositionally biased toward polar residues: residues 21–32 (NEPSNDCTTDIE) and 44–60 (VETN…TSQE).

The chain is CPX chromosomal region candidate gene 1 protein homolog (CPXCR1) from Macaca fascicularis (Crab-eating macaque).